The sequence spans 202 residues: dITP/XTP pyrophosphatase (202 aa).

A substrate-binding site is contributed by 10-15 (TSNRHK). The active-site Proton acceptor is Asp70. Position 70 (Asp70) interacts with Mg(2+). Residues Ser71, 153–156 (FGYD), Lys176, and 181–182 (HR) contribute to the substrate site.

The protein belongs to the HAM1 NTPase family. In terms of assembly, homodimer. Requires Mg(2+) as cofactor.

It catalyses the reaction XTP + H2O = XMP + diphosphate + H(+). It carries out the reaction dITP + H2O = dIMP + diphosphate + H(+). The enzyme catalyses ITP + H2O = IMP + diphosphate + H(+). Its function is as follows. Pyrophosphatase that catalyzes the hydrolysis of nucleoside triphosphates to their monophosphate derivatives, with a high preference for the non-canonical purine nucleotides XTP (xanthosine triphosphate), dITP (deoxyinosine triphosphate) and ITP. Seems to function as a house-cleaning enzyme that removes non-canonical purine nucleotides from the nucleotide pool, thus preventing their incorporation into DNA/RNA and avoiding chromosomal lesions. The polypeptide is dITP/XTP pyrophosphatase (Methylacidiphilum infernorum (isolate V4) (Methylokorus infernorum (strain V4))).